Consider the following 381-residue polypeptide: Cytochrome b (381 aa).

The next 4 helical transmembrane spans lie at phenylalanine 33 to methionine 53, tryptophan 77 to valine 98, tryptophan 113 to leucine 133, and phenylalanine 178 to leucine 198. 2 residues coordinate heme b: histidine 83 and histidine 97. Histidine 182 and histidine 196 together coordinate heme b. Histidine 201 is an a ubiquinone binding site. The next 4 membrane-spanning stretches (helical) occupy residues isoleucine 226–serine 246, leucine 288–histidine 308, valine 320–glycine 340, and phenylalanine 347–proline 367.

The protein belongs to the cytochrome b family. In terms of assembly, the cytochrome bc1 complex contains 11 subunits: 3 respiratory subunits (MT-CYB, CYC1 and UQCRFS1), 2 core proteins (UQCRC1 and UQCRC2) and 6 low-molecular weight proteins (UQCRH/QCR6, UQCRB/QCR7, UQCRQ/QCR8, UQCR10/QCR9, UQCR11/QCR10 and a cleavage product of UQCRFS1). This cytochrome bc1 complex then forms a dimer. Heme b is required as a cofactor.

It is found in the mitochondrion inner membrane. Its function is as follows. Component of the ubiquinol-cytochrome c reductase complex (complex III or cytochrome b-c1 complex) that is part of the mitochondrial respiratory chain. The b-c1 complex mediates electron transfer from ubiquinol to cytochrome c. Contributes to the generation of a proton gradient across the mitochondrial membrane that is then used for ATP synthesis. The chain is Cytochrome b (MT-CYB) from Dasyurus hallucatus (Northern quoll).